A 476-amino-acid polypeptide reads, in one-letter code: Fatty acid hydroperoxide lyase, chloroplastic (476 aa).

The helical transmembrane segment at 280-300 threads the bilayer; the sequence is LLFILGFNAFGGFSIFLPTLL. C438 contributes to the heme binding site.

It belongs to the cytochrome P450 family. Heme serves as cofactor. In terms of tissue distribution, highly expressed in developing flowers and in young leaves. Detected in stems and immature green fruits, but not in mature green and red fruits.

It is found in the plastid. Its subcellular location is the chloroplast outer membrane. With respect to regulation, reversibly inhibited by nordihydroguaiaretic acid (NDGA) and irreversibly by salicylic acid. Its function is as follows. Cytochrome P450 of the CYP74B subfamily involved in the biosynthesis of traumatin and C6 aldehydes. Metabolizes 13- but not 9-hydroperoxides of linoleic and linolenic acids. Can use 15S-hydroperoxy-11(Z),13(E),17(Z)-eicosatrienoic acid (15-HPET) and 13S-hydroperoxy-9(Z),11(E),15(Z)-octadecatrienoic acid (13-HPOT) as substrates, but only 5% activity with 13S-hydroperoxy-9(Z),11(E)-octadecadienoic acid (13-HPOD). Produces n-hexanal and 12-oxo-9(Z)-dodecanoic acid from 13-HPOD. This chain is Fatty acid hydroperoxide lyase, chloroplastic, found in Solanum lycopersicum (Tomato).